The primary structure comprises 481 residues: G-protein coupled receptor 37-like 1 (481 aa).

Positions Met-1 to Gly-24 are cleaved as a signal peptide. The Extracellular segment spans residues Ala-25 to Met-134. Disordered regions lie at residues Leu-30–Glu-55 and Leu-76–Thr-107. Over residues Thr-95–Thr-107 the composition is skewed to polar residues. Asn-105 is a glycosylation site (N-linked (GlcNAc...) asparagine). A helical membrane pass occupies residues Leu-135–Val-155. At Trp-156 to Ser-167 the chain is on the cytoplasmic side. A helical transmembrane segment spans residues Ile-168–Ile-188. Residues Phe-189 to Ala-205 lie on the Extracellular side of the membrane. A disulfide bridge connects residues Cys-203 and Cys-286. The chain crosses the membrane as a helical span at residues Val-206 to Ile-226. Over Asp-227–Lys-251 the chain is Cytoplasmic. A helical transmembrane segment spans residues Leu-252 to Leu-272. Over Ala-273–Met-310 the chain is Extracellular. Residues Trp-311 to Val-331 form a helical membrane-spanning segment. Residues Thr-332–Thr-360 lie on the Cytoplasmic side of the membrane. A helical membrane pass occupies residues Val-361–Val-381. Residues Val-382 to Gly-398 are Extracellular-facing. A helical transmembrane segment spans residues Leu-399–Ile-419. Topologically, residues Cys-420–Cys-481 are cytoplasmic. Ser-471 carries the phosphoserine modification. Phosphothreonine is present on Thr-479.

The protein belongs to the G-protein coupled receptor 1 family. Interacts with the PTCH1 receptor. In terms of processing, undergoes metalloprotease-mediated cleavage which reduces its constitutive activity. Post-translationally, ubiquitinated. As to expression, highly expressed in brain.

The protein localises to the cell membrane. Its subcellular location is the cell projection. The protein resides in the cilium membrane. Its function is as follows. G-protein coupled receptor. Has been shown to bind the neuroprotective and glioprotective factor prosaposin (PSAP), leading to endocytosis followed by an ERK phosphorylation cascade. However, other studies have shown that prosaposin does not increase activity. It has been suggested that GPR37L1 is a constitutively active receptor which signals through the guanine nucleotide-binding protein G(s) subunit alpha. Participates in the regulation of postnatal cerebellar development by modulating the Shh pathway. Regulates baseline blood pressure in females and protects against cardiovascular stress in males. Mediates inhibition of astrocyte glutamate transporters and reduction in neuronal N-methyl-D-aspartate receptor activity. The polypeptide is G-protein coupled receptor 37-like 1 (Gpr37l1) (Rattus norvegicus (Rat)).